A 148-amino-acid chain; its full sequence is Histone H2B.1 (148 aa).

Residues 1-35 (MAPRAEKKPAEKKTAAERPVEENKAAEKAPAEKKP) are compositionally biased toward basic and acidic residues. The segment at 1 to 56 (MAPRAEKKPAEKKTAAERPVEENKAAEKAPAEKKPKAGKKLPPKEAGDKKKKRSKK) is disordered. Ala-2 is modified (n,N,N-trimethylalanine; alternate). Ala-2 bears the N,N-dimethylalanine; alternate mark. At Ala-2 the chain carries N-methylalanine; alternate. An N6-acetyllysine; partial modification is found at Lys-7. Lys-12 is modified (N6-acetyllysine). At Lys-13 the chain carries N6,N6-dimethyllysine. 3 positions are modified to N6-acetyllysine: Lys-28, Lys-33, and Lys-39. The residue at position 40 (Lys-40) is an N6-acetyllysine; partial. A Glycyl lysine isopeptide (Lys-Gly) (interchain with G-Cter in ubiquitin) cross-link involves residue Lys-144.

It belongs to the histone H2B family. As to quaternary structure, the nucleosome is a histone octamer containing two molecules each of H2A, H2B, H3 and H4 assembled in one H3-H4 heterotetramer and two H2A-H2B heterodimers. The octamer wraps approximately 147 bp of DNA. Interacts with AHL27. Post-translationally, can be acetylated to form H2BK6ac, H2BK33ac and H2BK34ac. Mono-, di- or trimethylated at the N-terminus to form H2BA1me1/2/3. H2BA1me2 may be acetylated to form H2BA1me2K6ac. In terms of processing, monoubiquitinated by BRE1 to form H2BK143ub1 and deubiquitinated by UBP26. Required for heterochromatic histone H3 di- and trimethylation at H3K4me. May give a specific tag for epigenetic transcriptional activation.

Its subcellular location is the nucleus. The protein resides in the chromosome. In terms of biological role, core component of nucleosome. Nucleosomes wrap and compact DNA into chromatin, limiting DNA accessibility to the cellular machineries which require DNA as a template. Histones thereby play a central role in transcription regulation, DNA repair, DNA replication and chromosomal stability. DNA accessibility is regulated via a complex set of post-translational modifications of histones, also called histone code, and nucleosome remodeling. In Arabidopsis thaliana (Mouse-ear cress), this protein is Histone H2B.1.